The primary structure comprises 620 residues: Notoamide biosynthesis transcriptional activator notL' (620 aa).

Residues 1-26 (MPPSSKSRRLPPAASDSAASDAQKRR) are disordered. Positions 33 to 59 (CSACKARKLKCTGAPPCANCVKSRIEC) form a DNA-binding region, zn(2)-C6 fungal-type. Residues 591–620 (ETGAFFLDPDQPSGNSTPIKSETPEGTAIS) form a disordered region.

It is found in the nucleus. In terms of biological role, transcription factor that probably regulates the expression of the gene cluster that mediates the biosynthesis of notoamide, a fungal indole alkaloid that belongs to a family of natural products containing a characteristic bicyclo[2.2.2]diazaoctane core. The polypeptide is Notoamide biosynthesis transcriptional activator notL' (Aspergillus versicolor).